Here is a 267-residue protein sequence, read N- to C-terminus: UPF0162 protein HI_1558 (267 aa).

Belongs to the UPF0162 family.

The chain is UPF0162 protein HI_1558 from Haemophilus influenzae (strain ATCC 51907 / DSM 11121 / KW20 / Rd).